A 282-amino-acid chain; its full sequence is Bicarbonate transport ATP-binding protein CmpD (282 aa).

The ABC transporter domain maps to 24–257; it reads LTIENVSKVY…RPRDRDRIME (234 aa). 60 to 67 is an ATP binding site; it reads GHSGCGKS.

Belongs to the ABC transporter superfamily. Nitrate/nitrite/cyanate uptake transporter (NitT) (TC 3.A.1.16) family. As to quaternary structure, the complex is composed of two ATP-binding proteins (CmpC and CmpD), a transmembrane protein (CmpB) and a solute-binding protein (CmpA).

The protein localises to the cell inner membrane. In terms of biological role, part of the ABC transporter complex CmpABCD involved in bicarbonate transport. Responsible for energy coupling to the transport system. The chain is Bicarbonate transport ATP-binding protein CmpD (cmpD) from Synechocystis sp. (strain ATCC 27184 / PCC 6803 / Kazusa).